The sequence spans 233 residues: Octanoyltransferase (233 aa).

Residues 34–214 form the BPL/LPL catalytic domain; the sequence is GQAPSTVLLL…EFSAREATLI (181 aa). Residues 72 to 79, 144 to 146, and 157 to 159 each bind substrate; these read RGGKLTWH, AIG, and GFS. The active-site Acyl-thioester intermediate is the Cys175.

The protein belongs to the LipB family.

The protein resides in the cytoplasm. The enzyme catalyses octanoyl-[ACP] + L-lysyl-[protein] = N(6)-octanoyl-L-lysyl-[protein] + holo-[ACP] + H(+). It functions in the pathway protein modification; protein lipoylation via endogenous pathway; protein N(6)-(lipoyl)lysine from octanoyl-[acyl-carrier-protein]: step 1/2. Its function is as follows. Catalyzes the transfer of endogenously produced octanoic acid from octanoyl-acyl-carrier-protein onto the lipoyl domains of lipoate-dependent enzymes. Lipoyl-ACP can also act as a substrate although octanoyl-ACP is likely to be the physiological substrate. The sequence is that of Octanoyltransferase from Renibacterium salmoninarum (strain ATCC 33209 / DSM 20767 / JCM 11484 / NBRC 15589 / NCIMB 2235).